A 434-amino-acid chain; its full sequence is Glutamyl-tRNA reductase (434 aa).

Substrate is bound by residues 49–52 (TCNR), serine 109, 114–116 (EPQ), and glutamine 120. Cysteine 50 functions as the Nucleophile in the catalytic mechanism. 189–194 (GAGEMA) lines the NADP(+) pocket.

This sequence belongs to the glutamyl-tRNA reductase family. As to quaternary structure, homodimer.

It catalyses the reaction (S)-4-amino-5-oxopentanoate + tRNA(Glu) + NADP(+) = L-glutamyl-tRNA(Glu) + NADPH + H(+). Its pathway is porphyrin-containing compound metabolism; protoporphyrin-IX biosynthesis; 5-aminolevulinate from L-glutamyl-tRNA(Glu): step 1/2. In terms of biological role, catalyzes the NADPH-dependent reduction of glutamyl-tRNA(Glu) to glutamate 1-semialdehyde (GSA). The chain is Glutamyl-tRNA reductase from Desulfatibacillum aliphaticivorans.